A 39-amino-acid polypeptide reads, in one-letter code: U2-ctenitoxin-Co1a (39 aa).

Disulfide bonds are present. As to expression, expressed by the venom gland.

It localises to the secreted. Functionally, omega-agatoxins are antagonists of voltage-gated calcium channels (Cav). In Ctenus ornatus (Brazilian spider), this protein is U2-ctenitoxin-Co1a.